The chain runs to 87 residues: Acyl-CoA-binding protein (87 aa).

The residue at position 2 (Ser-2) is an N-acetylserine. The ACB domain maps to 2–87 (SQAEFEKAAE…VEELKKKYGI (86 aa)). Position 8 is an N6-acetyllysine; alternate (Lys-8). The residue at position 8 (Lys-8) is an N6-succinyllysine; alternate. Lys-14 contacts an acyl-CoA. The residue at position 17 (Lys-17) is an N6-succinyllysine. Lys-19 carries the post-translational modification N6-acetyllysine. Tyr-29 carries the post-translational modification Phosphotyrosine. An acyl-CoA is bound by residues 29–33 (YSHYK), Lys-51, Lys-55, and Tyr-74. An N6-acetyllysine modification is found at Lys-51. At Lys-55 the chain carries N6-acetyllysine; alternate. N6-succinyllysine; alternate is present on Lys-55. Lys-55 carries the post-translational modification N6-(2-hydroxyisobutyryl)lysine; alternate. Lys-55 bears the N6-malonyllysine; alternate mark. Lys-77 is subject to N6-acetyllysine; alternate. Lys-77 carries the N6-succinyllysine; alternate modification.

The protein belongs to the ACBP family. In terms of assembly, monomer.

It is found in the endoplasmic reticulum. It localises to the golgi apparatus. Binds medium- and long-chain acyl-CoA esters with very high affinity and may function as an intracellular carrier of acyl-CoA esters. It is also able to displace diazepam from the benzodiazepine (BZD) recognition site located on the GABA type A receptor. It is therefore possible that this protein also acts as a neuropeptide to modulate the action of the GABA receptor. Its function is as follows. DBI(32-86) has antibacterial properties. This Sus scrofa (Pig) protein is Acyl-CoA-binding protein (DBI).